The following is a 472-amino-acid chain: Sarcalumenin (472 aa).

The signal sequence occupies residues 1 to 19; it reads MRALLLFCFVASLLLSGQA. In terms of domain architecture, Dynamin-type G spans 89-330; that stretch reads ITSKPMVLFL…IENRLENKIA (242 aa). Positions 99–106 are G1 motif; sequence GPWSVGKS. Serine 102 is a glycosylation site (N-linked (GlcNAc...) asparagine). The tract at residues 127 to 128 is G2 motif; that stretch reads EP. The segment at 189-192 is G3 motif; sequence DTPG. A G4 motif region spans residues 254–257; the sequence is NKAD. Proline 277 is a region of interest (G5 motif). N-linked (GlcNAc...) asparagine glycosylation is found at asparagine 280 and asparagine 388.

It belongs to the TRAFAC class dynamin-like GTPase superfamily. Dynamin/Fzo/YdjA family. Post-translationally, N-glycosylated. In terms of tissue distribution, detected in skeletal muscle.

It is found in the sarcoplasmic reticulum lumen. The protein resides in the sarcoplasmic reticulum membrane. This Oryctolagus cuniculus (Rabbit) protein is Sarcalumenin (SRL).